The chain runs to 149 residues: 3-hydroxyacyl-[acyl-carrier-protein] dehydratase FabZ (149 aa).

Residue His-53 is part of the active site.

This sequence belongs to the thioester dehydratase family. FabZ subfamily.

Its subcellular location is the cytoplasm. It catalyses the reaction a (3R)-hydroxyacyl-[ACP] = a (2E)-enoyl-[ACP] + H2O. Functionally, involved in unsaturated fatty acids biosynthesis. Catalyzes the dehydration of short chain beta-hydroxyacyl-ACPs and long chain saturated and unsaturated beta-hydroxyacyl-ACPs. The sequence is that of 3-hydroxyacyl-[acyl-carrier-protein] dehydratase FabZ from Polynucleobacter necessarius subsp. necessarius (strain STIR1).